Here is a 142-residue protein sequence, read N- to C-terminus: uncharacterized protein (142 aa).

A disordered region spans residues 1-31; it reads MSLPKKKKPEVEEEEKPEEEEEKEEEQEIDI. A compositionally biased stretch (acidic residues) spans 11–29; that stretch reads VEEEEKPEEEEEKEEEQEI.

This is an uncharacterized protein from Acidianus sp. F28 (AFV-2).